The chain runs to 312 residues: Borealin-2 (312 aa).

Positions 1 to 10 (MPPRKAPAKR) are enriched in basic residues. The segment at 1-26 (MPPRKAPAKRRSTDSGVERDRGALSQ) is disordered. Residues 11–26 (RSTDSGVERDRGALSQ) are compositionally biased toward basic and acidic residues.

It belongs to the borealin family. As to quaternary structure, component of the CPC complex.

It localises to the nucleus. The protein resides in the chromosome. The protein localises to the centromere. Its function is as follows. Component of the chromosomal passenger complex (CPC), a complex that acts as a key regulator of mitosis. The CPC complex has essential functions at the centromere in ensuring correct chromosome alignment and segregation and is required for chromatin-induced microtubule stabilization and spindle assembly. In Gallus gallus (Chicken), this protein is Borealin-2.